We begin with the raw amino-acid sequence, 430 residues long: Rosmarinate synthase (430 aa).

The active-site Proton acceptor is the His152. The tract at residues 178–210 (TPLPHFDRSSLSARNPPQPQFSHAEYQPPPTLE) is disordered. The active-site Proton acceptor is Asp377.

Belongs to the plant acyltransferase family.

The catalysed reaction is (2R)-3-(3,4-dihydroxyphenyl)lactate + (E)-caffeoyl-CoA = (R)-rosmarinate + CoA. In terms of biological role, involved in the biosynthesis of rosmarinic acid, a compound with antiviral, antimicrobial and anti-inflammatory activities. Can use 4-coumaroyl- and caffeoyl-CoA as hydroxycinnamoyl donors and 4-Hydroxyphenyllactate and 3.4-Dihydroxyphenyllactate, but not shikimate or quinate, as hydroxycinnamoyl acceptors. Can also putatively catalyze amide formation with D-amino acids as acceptors. The polypeptide is Rosmarinate synthase (RAS) (Plectranthus scutellarioides (Coleus)).